The primary structure comprises 92 residues: Small ribosomal subunit protein uS19 (92 aa).

This sequence belongs to the universal ribosomal protein uS19 family.

Functionally, protein S19 forms a complex with S13 that binds strongly to the 16S ribosomal RNA. This chain is Small ribosomal subunit protein uS19, found in Polaromonas sp. (strain JS666 / ATCC BAA-500).